Here is a 312-residue protein sequence, read N- to C-terminus: R2-like ligand binding oxidase (312 aa).

3 residues coordinate Mn(2+): E68, E101, and H104. A cross-link (3-(O4'-tyrosyl)-valine (Val-Tyr)) is located at residues 71–162 (VTQDIQPFMA…AAQVRASATY (92 aa)). E101 is a Fe cation binding site. 3 residues coordinate Fe cation: E167, E202, and H205.

This sequence belongs to the ribonucleoside diphosphate reductase small chain family. R2-like ligand binding oxidase subfamily. Homodimer. Requires Fe cation as cofactor. Mn(2+) serves as cofactor.

Functionally, probable oxidase that might be involved in lipid metabolism. The sequence is that of R2-like ligand binding oxidase from Mycobacterium sp. (strain KMS).